The chain runs to 280 residues: Large ribosomal subunit protein uL2 (280 aa).

Disordered stretches follow at residues 29 to 58 (PEKS…GGGH) and 225 to 280 (VMNP…NKKR). Positions 45-58 (SHGHITTRHRGGGH) are enriched in basic residues. A compositionally biased stretch (basic and acidic residues) spans 253–269 (KEGRTRKPKRYSDDMIV). Residues 270-280 (RRRRANKNKKR) are compositionally biased toward basic residues.

The protein belongs to the universal ribosomal protein uL2 family. In terms of assembly, part of the 50S ribosomal subunit. Forms a bridge to the 30S subunit in the 70S ribosome.

Its function is as follows. One of the primary rRNA binding proteins. Required for association of the 30S and 50S subunits to form the 70S ribosome, for tRNA binding and peptide bond formation. It has been suggested to have peptidyltransferase activity; this is somewhat controversial. Makes several contacts with the 16S rRNA in the 70S ribosome. The chain is Large ribosomal subunit protein uL2 from Corynebacterium glutamicum (strain R).